Here is a 544-residue protein sequence, read N- to C-terminus: BTB/POZ domain-containing protein At2g13690 (544 aa).

2 disordered regions span residues 34 to 66 (ASPD…PQSS) and 82 to 111 (LSPG…EEDD). A compositionally biased stretch (polar residues) spans 37-55 (DTRSISSRNHIPAKSQQQR). A compositionally biased stretch (low complexity) spans 93–103 (DPTVTTMQETE). The region spanning 142 to 225 (YDARLSLKGR…MFEESNVIIK (84 aa)) is the BTB domain.

Its pathway is protein modification; protein ubiquitination. May act as a substrate-specific adapter of an E3 ubiquitin-protein ligase complex (CUL3-RBX1-BTB) which mediates the ubiquitination and subsequent proteasomal degradation of target proteins. The chain is BTB/POZ domain-containing protein At2g13690 (PRL1-IFG) from Arabidopsis thaliana (Mouse-ear cress).